Reading from the N-terminus, the 162-residue chain is CASP-like protein 0U1 (162 aa).

Residues 1–11 (MAAVEAAKTPR) lie on the Cytoplasmic side of the membrane. A helical membrane pass occupies residues 12-32 (FILLIIEWVFALVAFAVMGHY). At 33 to 43 (LFDDRRSSFEY) the chain is on the extracellular side. A helical transmembrane segment spans residues 44–64 (LTAICILVWLVVMIYMVILCC). The Cytoplasmic portion of the chain corresponds to 65–69 (GRALP). Residues 70 to 90 (PLIEAAIFLLFAILVFIAFLV) traverse the membrane as a helical segment. Over 91 to 123 (TAVKCNNSETIVIAGQTISRKVCEGESEPKAAA) the chain is Extracellular. A glycan (N-linked (GlcNAc...) asparagine) is linked at Asn96. A helical membrane pass occupies residues 124–144 (AFAFLLGLLLAGSSVLGCIAF). At 145-162 (RRPSAPPLSSFQNPTSSV) the chain is on the cytoplasmic side.

It belongs to the Casparian strip membrane proteins (CASP) family. Homodimer and heterodimers.

It localises to the cell membrane. This chain is CASP-like protein 0U1, found in Chlorokybus atmophyticus (Soil alga).